The primary structure comprises 502 residues: Probable glycine dehydrogenase (decarboxylating) subunit 2 (502 aa).

Lysine 273 bears the N6-(pyridoxal phosphate)lysine mark.

Belongs to the GcvP family. C-terminal subunit subfamily. The glycine cleavage system is composed of four proteins: P, T, L and H. In this organism, the P 'protein' is a heterodimer of two subunits. Requires pyridoxal 5'-phosphate as cofactor.

It catalyses the reaction N(6)-[(R)-lipoyl]-L-lysyl-[glycine-cleavage complex H protein] + glycine + H(+) = N(6)-[(R)-S(8)-aminomethyldihydrolipoyl]-L-lysyl-[glycine-cleavage complex H protein] + CO2. The glycine cleavage system catalyzes the degradation of glycine. The P protein binds the alpha-amino group of glycine through its pyridoxal phosphate cofactor; CO(2) is released and the remaining methylamine moiety is then transferred to the lipoamide cofactor of the H protein. The chain is Probable glycine dehydrogenase (decarboxylating) subunit 2 from Thermococcus onnurineus (strain NA1).